A 288-amino-acid polypeptide reads, in one-letter code: Elongation factor Ts (288 aa).

An involved in Mg(2+) ion dislocation from EF-Tu region spans residues 82-85 (TDFV).

Belongs to the EF-Ts family.

The protein resides in the cytoplasm. Functionally, associates with the EF-Tu.GDP complex and induces the exchange of GDP to GTP. It remains bound to the aminoacyl-tRNA.EF-Tu.GTP complex up to the GTP hydrolysis stage on the ribosome. In Chlorobium chlorochromatii (strain CaD3), this protein is Elongation factor Ts.